The primary structure comprises 228 residues: Lipoprotein-releasing system ATP-binding protein LolD (228 aa).

The ABC transporter domain occupies 6–227 (LELLGIDRTY…LKDGKLIDYV (222 aa)). An ATP-binding site is contributed by 42 to 49 (GPSGSGKS).

It belongs to the ABC transporter superfamily. Lipoprotein translocase (TC 3.A.1.125) family. As to quaternary structure, the complex is composed of two ATP-binding proteins (LolD) and two transmembrane proteins (LolC and LolE).

It is found in the cell inner membrane. Functionally, part of the ABC transporter complex LolCDE involved in the translocation of mature outer membrane-directed lipoproteins, from the inner membrane to the periplasmic chaperone, LolA. Responsible for the formation of the LolA-lipoprotein complex in an ATP-dependent manner. In Hyphomonas neptunium (strain ATCC 15444), this protein is Lipoprotein-releasing system ATP-binding protein LolD.